We begin with the raw amino-acid sequence, 275 residues long: Large ribosomal subunit protein uL2 (275 aa).

Disordered stretches follow at residues Leu24 to Gln54 and Val223 to Arg275. Basic and acidic residues-rich tracts occupy residues Tyr25 to Thr38 and Asp229 to Glu241.

This sequence belongs to the universal ribosomal protein uL2 family. In terms of assembly, part of the 50S ribosomal subunit. Forms a bridge to the 30S subunit in the 70S ribosome.

One of the primary rRNA binding proteins. Required for association of the 30S and 50S subunits to form the 70S ribosome, for tRNA binding and peptide bond formation. It has been suggested to have peptidyltransferase activity; this is somewhat controversial. Makes several contacts with the 16S rRNA in the 70S ribosome. This Azoarcus sp. (strain BH72) protein is Large ribosomal subunit protein uL2.